The following is a 542-amino-acid chain: Chaperonin GroEL 2 (542 aa).

ATP contacts are provided by residues 30–33 (TLGP), K51, 87–91 (DGTTT), G415, and D496.

This sequence belongs to the chaperonin (HSP60) family. In terms of assembly, forms a cylinder of 14 subunits composed of two heptameric rings stacked back-to-back. Interacts with the co-chaperonin GroES.

It is found in the cytoplasm. It carries out the reaction ATP + H2O + a folded polypeptide = ADP + phosphate + an unfolded polypeptide.. Its function is as follows. Together with its co-chaperonin GroES, plays an essential role in assisting protein folding. The GroEL-GroES system forms a nano-cage that allows encapsulation of the non-native substrate proteins and provides a physical environment optimized to promote and accelerate protein folding. The chain is Chaperonin GroEL 2 from Rhizobium leguminosarum.